A 430-amino-acid polypeptide reads, in one-letter code: Transcription factor PIF4 (430 aa).

Disordered stretches follow at residues 42–71 (QTHREQTQTQKQDHHEEALRSSTFLEDQET), 97–136 (MDPLQRPTSETVKPKSSPEPPQVMVKPKACPDPPPQVMPP), 160–183 (TVGPSHCGSNPSQNDLDVSMSHDR), 223–266 (DRKR…NLSE), and 405–430 (SSPAGQQSQQPSSVPTKTTDGSRLDH). The span at 43–60 (THREQTQTQKQDHHEEAL) shows a compositional bias: basic and acidic residues. The segment covering 61-71 (RSSTFLEDQET) has biased composition (polar residues). Pro residues predominate over residues 126-136 (CPDPPPQVMPP). A compositionally biased stretch (polar residues) spans 160-175 (TVGPSHCGSNPSQNDL). A compositionally biased stretch (low complexity) spans 244–253 (NKSNQRSGSN). Over residues 257 to 266 (RAAEVHNLSE) the composition is skewed to basic and acidic residues. The 50-residue stretch at 257–306 (RAAEVHNLSERRRRDRINERMKALQELIPHCSKTDKASILDEAIDYLKSL) folds into the bHLH domain. Low complexity predominate over residues 405 to 419 (SSPAGQQSQQPSSVP).

This sequence belongs to the bHLH protein family. In terms of assembly, interacts preferentially with the Pfr form of phytochrome B (phyB). Binds DNA as a homodimer, but once bound to DNA, loses its capacity to interact with phyB. Interacts with APRR1/TOC1 and PIF3. Binds to RGL2 and RGA. Forms non-functional heterodimer with HFR1. Interacts with PHYB, CRY1 and CRY2 in the nucleus in response to low blue light (LBL). Interacts with FYPP1 and FYPP3. Associates to PTAC12/HMR/PAP5, which acts as a transcriptional coactivator to trigger the thermoresponsive growth-relevant genes and promote warm-temperature-dependent PIF4 accumulation. Interacts with MED14. Mainly expressed in leaves, stems and seedlings, and, to a lower extent, in fruits, flowers and roots.

Its subcellular location is the nucleus. Its function is as follows. Transcription factor acting negatively in the phytochrome B signaling pathway. May regulate the expression of a subset of genes involved in cell expansion by binding to the G-box motif. Activated by CRY1 and CRY2 in response to low blue light (LBL) by direct binding at chromatin on E-box variant 5'-CA[CT]GTG-3' to stimulate specific gene expression to adapt global physiology (e.g. hypocotyl elongation in low blue light). Element of a PIF4/HMR/MED14-dependent thermoresponsive process; collaboratively with its transcriptional coactivator PTAC12/HMR/PAP5, involved in the regulation of thermoresponsive growth-relevant genes (e.g. mainly involved in biosynthesis and signaling of the phytohormone auxin) leading to daytime warm temperature elicitation of MED14-dependent thermomorphogenesis (e.g. hypocotyl elongation). This chain is Transcription factor PIF4, found in Arabidopsis thaliana (Mouse-ear cress).